Reading from the N-terminus, the 335-residue chain is tRNA pseudouridine synthase D (335 aa).

The active-site Nucleophile is the D77. Residues G152 to P308 form the TRUD domain.

The protein belongs to the pseudouridine synthase TruD family.

It catalyses the reaction uridine(13) in tRNA = pseudouridine(13) in tRNA. Functionally, responsible for synthesis of pseudouridine from uracil-13 in transfer RNAs. The sequence is that of tRNA pseudouridine synthase D from Histophilus somni (strain 129Pt) (Haemophilus somnus).